Here is a 129-residue protein sequence, read N- to C-terminus: MVYLAVGIAGMIGALVRYGLGLVVPAAAVGGFPLGTLFINWTGSFLLSWFTVMFTRRPAWPPWLKTAVTTGFVGSYTTFSTLSVECVELMEQGRFGMAAVYIAASLFGGLLASWAGYAAAQPERKEGIG.

Residues 19 to 39 (GLGLVVPAAAVGGFPLGTLFI) form a helical membrane-spanning segment. Na(+) contacts are provided by G74 and T77. Residues 95–115 (FGMAAVYIAASLFGGLLASWA) form a helical membrane-spanning segment.

This sequence belongs to the fluoride channel Fluc/FEX (TC 1.A.43) family.

It localises to the cell membrane. It carries out the reaction fluoride(in) = fluoride(out). Its activity is regulated as follows. Na(+) is not transported, but it plays an essential structural role and its presence is essential for fluoride channel function. Fluoride-specific ion channel. Important for reducing fluoride concentration in the cell, thus reducing its toxicity. The polypeptide is Fluoride-specific ion channel FluC 2 (Geobacillus kaustophilus (strain HTA426)).